We begin with the raw amino-acid sequence, 346 residues long: Elongation factor Ts (346 aa).

Residues 80 to 83 (TDFV) are involved in Mg(2+) ion dislocation from EF-Tu.

It belongs to the EF-Ts family.

Its subcellular location is the cytoplasm. Associates with the EF-Tu.GDP complex and induces the exchange of GDP to GTP. It remains bound to the aminoacyl-tRNA.EF-Tu.GTP complex up to the GTP hydrolysis stage on the ribosome. The protein is Elongation factor Ts of Streptococcus pyogenes serotype M3 (strain ATCC BAA-595 / MGAS315).